The following is a 299-amino-acid chain: Phosphatidylserine decarboxylase proenzyme (299 aa).

Residues Asp-115, His-171, and Ser-258 each act as charge relay system; for autoendoproteolytic cleavage activity in the active site. Ser-258 acts as the Schiff-base intermediate with substrate; via pyruvic acid; for decarboxylase activity in catalysis. Pyruvic acid (Ser); by autocatalysis is present on Ser-258.

Belongs to the phosphatidylserine decarboxylase family. PSD-B subfamily. Prokaryotic type II sub-subfamily. Heterodimer of a large membrane-associated beta subunit and a small pyruvoyl-containing alpha subunit. Pyruvate is required as a cofactor. In terms of processing, is synthesized initially as an inactive proenzyme. Formation of the active enzyme involves a self-maturation process in which the active site pyruvoyl group is generated from an internal serine residue via an autocatalytic post-translational modification. Two non-identical subunits are generated from the proenzyme in this reaction, and the pyruvate is formed at the N-terminus of the alpha chain, which is derived from the carboxyl end of the proenzyme. The autoendoproteolytic cleavage occurs by a canonical serine protease mechanism, in which the side chain hydroxyl group of the serine supplies its oxygen atom to form the C-terminus of the beta chain, while the remainder of the serine residue undergoes an oxidative deamination to produce ammonia and the pyruvoyl prosthetic group on the alpha chain. During this reaction, the Ser that is part of the protease active site of the proenzyme becomes the pyruvoyl prosthetic group, which constitutes an essential element of the active site of the mature decarboxylase.

The protein localises to the cell membrane. The catalysed reaction is a 1,2-diacyl-sn-glycero-3-phospho-L-serine + H(+) = a 1,2-diacyl-sn-glycero-3-phosphoethanolamine + CO2. It participates in phospholipid metabolism; phosphatidylethanolamine biosynthesis; phosphatidylethanolamine from CDP-diacylglycerol: step 2/2. In terms of biological role, catalyzes the formation of phosphatidylethanolamine (PtdEtn) from phosphatidylserine (PtdSer). The sequence is that of Phosphatidylserine decarboxylase proenzyme from Chlamydia felis (strain Fe/C-56) (Chlamydophila felis).